Reading from the N-terminus, the 515-residue chain is Fatty acyl-CoA reductase 2 (515 aa).

Topologically, residues 1–464 (MSTIAAFYGG…KAKQRLKRLR (464 aa)) are cytoplasmic. A helical membrane pass occupies residues 465 to 484 (NIHYLFNTALFLIAWRLLIA). At 485–515 (RSQMARNVWFFIVSFCYKFLSYFRASSTLKV) the chain is on the peroxisomal side.

This sequence belongs to the fatty acyl-CoA reductase family.

The protein resides in the peroxisome membrane. The catalysed reaction is a long-chain fatty acyl-CoA + 2 NADPH + 2 H(+) = a long-chain primary fatty alcohol + 2 NADP(+) + CoA. The enzyme catalyses a very long-chain fatty acyl-CoA + 2 NADPH + 2 H(+) = a very long-chain primary fatty alcohol + 2 NADP(+) + CoA. It catalyses the reaction an ultra-long-chain fatty acyl-CoA + 2 NADPH + 2 H(+) = an ultra long-chain primary fatty alcohol + 2 NADP(+) + CoA. It carries out the reaction hexadecanoyl-CoA + 2 NADPH + 2 H(+) = hexadecan-1-ol + 2 NADP(+) + CoA. The catalysed reaction is octadecanoyl-CoA + 2 NADPH + 2 H(+) = octadecan-1-ol + 2 NADP(+) + CoA. The enzyme catalyses eicosanoyl-CoA + 2 NADPH + 2 H(+) = eicosan-1-ol + 2 NADP(+) + CoA. It catalyses the reaction docosanoyl-CoA + 2 NADPH + 2 H(+) = docosan-1-ol + 2 NADP(+) + CoA. It carries out the reaction tetracosanoyl-CoA + 2 NADPH + 2 H(+) = tetracosan-1-ol + 2 NADP(+) + CoA. The catalysed reaction is hexacosanoyl-CoA + 2 NADPH + 2 H(+) = hexacosan-1-ol + 2 NADP(+) + CoA. The enzyme catalyses octacosanoyl-CoA + 2 NADPH + 2 H(+) = octacosan-1-ol + 2 NADP(+) + CoA. It catalyses the reaction triacontanoyl-CoA + 2 NADPH + 2 H(+) = triacontan-1-ol + 2 NADP(+) + CoA. It carries out the reaction 18-methylnonadecanoyl-CoA + 2 NADPH + 2 H(+) = 18-methylnonadecan-1-ol + 2 NADP(+) + CoA. The catalysed reaction is 20-methylheneicosanoyl-CoA + 2 NADPH + 2 H(+) = 20-methylheneicosan-1-ol + 2 NADP(+) + CoA. The enzyme catalyses 22-methyltricosanoyl-CoA + 2 NADPH + 2 H(+) = 22-methyltricosan-1-ol + 2 NADP(+) + CoA. It catalyses the reaction 24-methylpentacosanoyl-CoA + 2 NADPH + 2 H(+) = 24-methylpentacosan-1-ol + 2 NADP(+) + CoA. Its function is as follows. Catalyzes the reduction of saturated but not unsaturated C16 or C18 fatty acyl-CoA to fatty alcohols (FAls). A lower activity can be observed with shorter fatty acyl-CoA substrates. Can produce very long-chain and ultra long-chain FAls, regardless of whether they have a straight or branched chain. Involved in the production of ether lipids/plasmalogens and wax monoesters whose synthesis requires FAls as substrates. The protein is Fatty acyl-CoA reductase 2 of Homo sapiens (Human).